Consider the following 200-residue polypeptide: Ribonuclease HII (200 aa).

One can recognise an RNase H type-2 domain in the interval 10–200; sequence LIEAGCDEAG…LGDGQLNLNF (191 aa). The a divalent metal cation site is built by aspartate 16, glutamate 17, and aspartate 108.

It belongs to the RNase HII family. Mn(2+) is required as a cofactor. It depends on Mg(2+) as a cofactor.

The protein resides in the cytoplasm. The enzyme catalyses Endonucleolytic cleavage to 5'-phosphomonoester.. Its function is as follows. Endonuclease that specifically degrades the RNA of RNA-DNA hybrids. In Bacteroides thetaiotaomicron (strain ATCC 29148 / DSM 2079 / JCM 5827 / CCUG 10774 / NCTC 10582 / VPI-5482 / E50), this protein is Ribonuclease HII.